Consider the following 218-residue polypeptide: tRNA (guanine-N(7)-)-methyltransferase (218 aa).

The tract at residues methionine 1 to proline 26 is disordered. Positions valine 13–proline 26 are enriched in basic and acidic residues. Residues glutamate 45, glutamate 70, aspartate 97, and aspartate 119 each contribute to the S-adenosyl-L-methionine site. The active site involves aspartate 119. Lysine 123 contributes to the substrate binding site. An interaction with RNA region spans residues arginine 125–arginine 130. Substrate-binding positions include aspartate 155 and threonine 195–glutamate 198.

The protein belongs to the class I-like SAM-binding methyltransferase superfamily. TrmB family.

It carries out the reaction guanosine(46) in tRNA + S-adenosyl-L-methionine = N(7)-methylguanosine(46) in tRNA + S-adenosyl-L-homocysteine. It functions in the pathway tRNA modification; N(7)-methylguanine-tRNA biosynthesis. Its function is as follows. Catalyzes the formation of N(7)-methylguanine at position 46 (m7G46) in tRNA. This Lactobacillus delbrueckii subsp. bulgaricus (strain ATCC 11842 / DSM 20081 / BCRC 10696 / JCM 1002 / NBRC 13953 / NCIMB 11778 / NCTC 12712 / WDCM 00102 / Lb 14) protein is tRNA (guanine-N(7)-)-methyltransferase.